The following is a 252-amino-acid chain: NDR1/HIN1-like protein 6 (252 aa).

The segment at 1-46 (MSQHQKIYPVQDPEAATARPTAPLVPRGSSRSEHGDPSKVPLNQRP) is disordered. The helical transmembrane segment at 70–90 (FCFLLLLVVAVGASIGILYLV) threads the bilayer. Asn121, Asn154, Asn166, and Asn180 each carry an N-linked (GlcNAc...) asparagine glycan.

In terms of assembly, homodimer. Highly expressed in seeds and at lower level in roots and senescing leaves. Expressed in leaves and flowers.

The protein localises to the cell membrane. The protein resides in the cytoplasm. It is found in the cytosol. In terms of biological role, plays an important role in the abiotic stresses-induced abscisic acid (ABA) signaling and biosynthesis. Acts as a positive regulator of ABA-mediated seed germination inhibition. Functions downstream of ABF2/AREB1, ABF4/AREB2 and ABF3. The sequence is that of NDR1/HIN1-like protein 6 from Arabidopsis thaliana (Mouse-ear cress).